Here is a 212-residue protein sequence, read N- to C-terminus: Pyrrolidone-carboxylate peptidase (212 aa).

Active-site residues include Glu78, Cys141, and His165.

It belongs to the peptidase C15 family. Homotetramer.

Its subcellular location is the cytoplasm. It carries out the reaction Release of an N-terminal pyroglutamyl group from a polypeptide, the second amino acid generally not being Pro.. Its function is as follows. Removes 5-oxoproline from various penultimate amino acid residues except L-proline. The sequence is that of Pyrrolidone-carboxylate peptidase (pcp) from Staphylococcus aureus.